A 354-amino-acid chain; its full sequence is Ferrochelatase (354 aa).

Positions 214 and 295 each coordinate Fe cation.

The protein belongs to the ferrochelatase family.

The protein resides in the cytoplasm. It carries out the reaction heme b + 2 H(+) = protoporphyrin IX + Fe(2+). Its pathway is porphyrin-containing compound metabolism; protoheme biosynthesis; protoheme from protoporphyrin-IX: step 1/1. Its function is as follows. Catalyzes the ferrous insertion into protoporphyrin IX. The polypeptide is Ferrochelatase (Burkholderia cenocepacia (strain HI2424)).